Reading from the N-terminus, the 175-residue chain is Protein OPG036 (175 aa).

It belongs to the poxviridae OPG036 family.

It localises to the host nucleus. Its function is as follows. Plays a role in the inhibition of host innate immune response. Within the host nucleus, inhibits activation of interferon-beta promoter by inhibiting IRF3 activation. In Bos taurus (Bovine), this protein is Protein OPG036 (OPG036).